Consider the following 153-residue polypeptide: Two-component response regulator ARR17 (153 aa).

One can recognise a Response regulatory domain in the interval 21–149; that stretch reads HVLAVDDNLI…DVEKLKCHLL (129 aa). Asp-82 carries the 4-aspartylphosphate modification.

The protein belongs to the ARR family. Type-A subfamily. Post-translationally, two-component system major event consists of a His-to-Asp phosphorelay between a sensor histidine kinase (HK) and a response regulator (RR). In plants, the His-to-Asp phosphorelay involves an additional intermediate named Histidine-containing phosphotransfer protein (HPt). This multistep phosphorelay consists of a His-Asp-His-Asp sequential transfer of a phosphate group between first a His and an Asp of the HK protein, followed by the transfer to a conserved His of the HPt protein and finally the transfer to an Asp in the receiver domain of the RR protein.

The protein resides in the nucleus. In terms of biological role, functions as a response regulator involved in His-to-Asp phosphorelay signal transduction system. Phosphorylation of the Asp residue in the receiver domain activates the ability of the protein to promote the transcription of target genes. Type-A response regulators seem to act as negative regulators of the cytokinin signaling. The chain is Two-component response regulator ARR17 (ARR17) from Arabidopsis thaliana (Mouse-ear cress).